The primary structure comprises 207 residues: 2,3-bisphosphoglycerate-dependent phosphoglycerate mutase (207 aa).

Substrate is bound by residues 10–17, 23–24, Arg-62, 89–92, Lys-100, 116–117, and 160–161; these read RHGQSEWN, TG, ERDY, RR, and GN. His-11 acts as the Tele-phosphohistidine intermediate in catalysis. The active-site Proton donor/acceptor is Glu-89.

The protein belongs to the phosphoglycerate mutase family. BPG-dependent PGAM subfamily. Homodimer.

The enzyme catalyses (2R)-2-phosphoglycerate = (2R)-3-phosphoglycerate. Its pathway is carbohydrate degradation; glycolysis; pyruvate from D-glyceraldehyde 3-phosphate: step 3/5. Functionally, catalyzes the interconversion of 2-phosphoglycerate and 3-phosphoglycerate. In Afipia carboxidovorans (strain ATCC 49405 / DSM 1227 / KCTC 32145 / OM5) (Oligotropha carboxidovorans), this protein is 2,3-bisphosphoglycerate-dependent phosphoglycerate mutase.